The following is a 418-amino-acid chain: MFLKNILSVLAFALLIDAAPVKRSPGFVTLDFNVKRSLVDPDDPTVEAKRSPLFLEFTPSEFPVDETGRDGDVDKRGPVAVTLHNEAITYTADITVGSDNQKLNVIVDTGSSDLWIPDSNVICIPKWRGDKGDFCKSAGSYSPASSRTSQNLNTRFDIKYGDGSYAKGKLYKDTVGIGGVSVRDQLFANVWSTSARKGILGIGFQSGEATEFDYDNLPISLRNQGIIGKAAYSLYLNSAEASTGQIIFGGIDKAKYSGSLVDLPITSEKKLTVGLRSVNVRGRNVDANTNVLLDSGTTISYFTRSIVRNILYAIGAQMKFDSAGNKVYVADCKTSGTIDFQFGNNLKISVPVSEFLFQTYYTSGKPFPKCEVRIRESEDNILGDNFLRSAYVVYNLDDKKISMAPVKYTSESDIVAIN.

A signal peptide spans 1–18 (MFLKNILSVLAFALLIDA). Positions 19–76 (APVKRSPGFVTLDFNVKRSLVDPDDPTVEAKRSPLFLEFTPSEFPVDETGRDGDVDKR) are cleaved as a propeptide — activation peptide. One can recognise a Peptidase A1 domain in the interval 90 to 404 (YTADITVGSD…NLDDKKISMA (315 aa)). Residue Asp-108 is part of the active site. 108–110 (DTG) is a binding site for pepstatin A. Cys-123 and Cys-135 are oxidised to a cystine. A pepstatin A-binding site is contributed by 161-162 (GD). Glu-268 provides a ligand contact to Zn(2+). Residue Asp-294 is part of the active site. Position 294–298 (294–298 (DSGTT)) interacts with pepstatin A. Cysteines 332 and 370 form a disulfide.

This sequence belongs to the peptidase A1 family.

Its subcellular location is the secreted. It catalyses the reaction Preferential cleavage at the carboxyl of hydrophobic amino acids, but fails to cleave 15-Leu-|-Tyr-16, 16-Tyr-|-Leu-17 and 24-Phe-|-Phe-25 of insulin B chain. Activates trypsinogen, and degrades keratin.. Inhibited by pepstatin A analogs. Secreted aspartic peptidases (SAPs) are a group of ten acidic hydrolases considered as key virulence factors. These enzymes supply the fungus with nutrient amino acids as well as are able to degrade the selected host's proteins involved in the immune defense. Moreover, acts toward human hemoglobin though limited proteolysis to generate a variety of antimicrobial hemocidins, enabling to compete with the other microorganisms of the same physiological niche using the microbicidal peptides generated from the host protein. The protein is Secreted aspartic protease 5 of Candida albicans (strain SC5314 / ATCC MYA-2876) (Yeast).